The sequence spans 339 residues: Centromere protein N (339 aa).

Residues Ser-226 and Ser-235 each carry the phosphoserine modification.

The protein belongs to the CENP-N/CHL4 family. As to quaternary structure, component of the CENPA-NAC complex, at least composed of CENPA, CENPC, CENPH, CENPM, CENPN, CENPT and CENPU. The CENPA-NAC complex interacts with the CENPA-CAD complex, composed of CENPI, CENPK, CENPL, CENPO, CENPP, CENPQ, CENPR and CENPS. Interacts directly with CENPA. Identified in a centromere complex containing histones H2A, H2B and H4, and at least CENPA, CENPB, CENPC, CENPT, CENPN, HJURP, SUPT16H, SSRP1 and RSF1.

Its subcellular location is the nucleus. It is found in the chromosome. The protein resides in the centromere. It localises to the kinetochore. Its function is as follows. Component of the CENPA-NAC (nucleosome-associated) complex, a complex that plays a central role in assembly of kinetochore proteins, mitotic progression and chromosome segregation. The CENPA-NAC complex recruits the CENPA-CAD (nucleosome distal) complex and may be involved in incorporation of newly synthesized CENPA into centromeres. CENPN is the first protein to bind specifically to CENPA nucleosomes and the direct binding of CENPA nucleosomes by CENPN is required for centromere assembly. Required for chromosome congression and efficiently align the chromosomes on a metaphase plate. The chain is Centromere protein N (CENPN) from Bos taurus (Bovine).